The chain runs to 660 residues: tRNA 5-methylaminomethyl-2-thiouridine biosynthesis bifunctional protein MnmC (660 aa).

A tRNA (mnm(5)s(2)U34)-methyltransferase region spans residues 1–241 (MNDHPAQDAF…KREILRGHLQ (241 aa)). Positions 268–660 (IGAGLAGCAT…FLLRKLIRGT (393 aa)) are FAD-dependent cmnm(5)s(2)U34 oxidoreductase.

The protein in the N-terminal section; belongs to the methyltransferase superfamily. tRNA (mnm(5)s(2)U34)-methyltransferase family. This sequence in the C-terminal section; belongs to the DAO family. The cofactor is FAD.

The protein localises to the cytoplasm. It carries out the reaction 5-aminomethyl-2-thiouridine(34) in tRNA + S-adenosyl-L-methionine = 5-methylaminomethyl-2-thiouridine(34) in tRNA + S-adenosyl-L-homocysteine + H(+). Catalyzes the last two steps in the biosynthesis of 5-methylaminomethyl-2-thiouridine (mnm(5)s(2)U) at the wobble position (U34) in tRNA. Catalyzes the FAD-dependent demodification of cmnm(5)s(2)U34 to nm(5)s(2)U34, followed by the transfer of a methyl group from S-adenosyl-L-methionine to nm(5)s(2)U34, to form mnm(5)s(2)U34. This chain is tRNA 5-methylaminomethyl-2-thiouridine biosynthesis bifunctional protein MnmC, found in Stutzerimonas stutzeri (strain A1501) (Pseudomonas stutzeri).